Reading from the N-terminus, the 559-residue chain is Large neutral amino acids transporter small subunit 3 (559 aa).

A helical transmembrane segment spans residues 20–40; it reads VLENLFFSAVLLGWGSLLIIL. A glycan (N-linked (GlcNAc...) asparagine) is linked at Asn57. 5 helical membrane passes run 78–98, 105–124, 131–151, 168–188, and 191–211; these read LGFT…GILM, PVRL…MALA, LSPL…CLTF, MALM…IKLI, and AGVA…LIFL. Residues Asn212 and Asn229 are each glycosylated (N-linked (GlcNAc...) asparagine). 3 positions are modified to phosphoserine: Ser237, Ser262, and Ser267. 6 helical membrane passes run 304–324, 357–377, 419–439, 446–466, 485–505, and 510–530; these read FLWS…YMAA, SVFG…GYIM, AISA…TCLI, FVTF…CGSL, LISA…VGPL, and FWVN…PSYL.

The protein belongs to the SLC43A transporter (TC 2.A.1.44) family. As to expression, ubiquitously expressed in fetus and adult. Highest expression in adult pancreas, liver, skeletal muscle. In fetus, highest expression in liver and lower levels in kidney, and lung. Exclusively expressed in the glomeruli along the glomerular capillary walls.

It is found in the cell membrane. The protein localises to the apical cell membrane. It localises to the endoplasmic reticulum membrane. The catalysed reaction is D-leucine(in) = D-leucine(out). It carries out the reaction L-leucine(in) = L-leucine(out). The enzyme catalyses L-isoleucine(in) = L-isoleucine(out). It catalyses the reaction L-methionine(in) = L-methionine(out). The catalysed reaction is L-phenylalanine(in) = L-phenylalanine(out). It carries out the reaction L-valine(in) = L-valine(out). In terms of biological role, uniport that mediates the transport of neutral amino acids such as L-leucine, L-isoleucine, L-valine, and L-phenylalanine. The transport activity is sodium ions-independent, electroneutral and mediated by a facilitated diffusion. In Homo sapiens (Human), this protein is Large neutral amino acids transporter small subunit 3.